A 180-amino-acid polypeptide reads, in one-letter code: Iron sulfur cluster assembly protein 1, mitochondrial (180 aa).

Belongs to the NifU family. In terms of assembly, component of the core Fe-S cluster (ISC) assembly machinery. [2Fe-2S] cluster serves as cofactor.

It is found in the mitochondrion matrix. It participates in cofactor biosynthesis; iron-sulfur cluster biosynthesis. Its function is as follows. Scaffold protein for the de novo synthesis of iron-sulfur (Fe-S) clusters within mitochondria, which is required for maturation of both mitochondrial and cytoplasmic [2Fe-2S] and [4Fe-4S] proteins. First, a [2Fe-2S] cluster is transiently assembled on the scaffold protein ISU1. In a second step, the cluster is released from ISU1, transferred to a glutaredoxin, followed by the formation of mitochondrial [2Fe-2S] proteins, the synthesis of [4Fe-4S] clusters and their target-specific insertion into the recipient apoproteins. Cluster assembly on ISU1 depends on the function of the cysteine desulfurase complex NFS1-ISD11, which serves as the sulfur donor for cluster synthesis, the iron-binding protein frataxin as the putative iron donor, and the electron transfer chain comprised of ferredoxin reductase and ferredoxin, which receive their electrons from NADH. The chain is Iron sulfur cluster assembly protein 1, mitochondrial (ISU1) from Kluyveromyces lactis (strain ATCC 8585 / CBS 2359 / DSM 70799 / NBRC 1267 / NRRL Y-1140 / WM37) (Yeast).